The sequence spans 376 residues: Queuine tRNA-ribosyltransferase (376 aa).

The Proton acceptor role is filled by D93. Substrate-binding positions include 93 to 97, D147, Q190, and G217; that span reads DSGGF. Residues 248–254 form an RNA binding region; that stretch reads GVGTPDD. D267 acts as the Nucleophile in catalysis. Positions 272–276 are RNA binding; important for wobble base 34 recognition; it reads TRAGR.

This sequence belongs to the queuine tRNA-ribosyltransferase family. Homodimer. Within each dimer, one monomer is responsible for RNA recognition and catalysis, while the other monomer binds to the replacement base PreQ1.

The catalysed reaction is 7-aminomethyl-7-carbaguanine + guanosine(34) in tRNA = 7-aminomethyl-7-carbaguanosine(34) in tRNA + guanine. It participates in tRNA modification; tRNA-queuosine biosynthesis. Functionally, catalyzes the base-exchange of a guanine (G) residue with the queuine precursor 7-aminomethyl-7-deazaguanine (PreQ1) at position 34 (anticodon wobble position) in tRNAs with GU(N) anticodons (tRNA-Asp, -Asn, -His and -Tyr). Catalysis occurs through a double-displacement mechanism. The nucleophile active site attacks the C1' of nucleotide 34 to detach the guanine base from the RNA, forming a covalent enzyme-RNA intermediate. The proton acceptor active site deprotonates the incoming PreQ1, allowing a nucleophilic attack on the C1' of the ribose to form the product. After dissociation, two additional enzymatic reactions on the tRNA convert PreQ1 to queuine (Q), resulting in the hypermodified nucleoside queuosine (7-(((4,5-cis-dihydroxy-2-cyclopenten-1-yl)amino)methyl)-7-deazaguanosine). The chain is Queuine tRNA-ribosyltransferase from Mesorhizobium japonicum (strain LMG 29417 / CECT 9101 / MAFF 303099) (Mesorhizobium loti (strain MAFF 303099)).